The chain runs to 328 residues: 3-dehydroquinate synthase (328 aa).

This sequence belongs to the archaeal-type DHQ synthase family.

The enzyme catalyses 2-amino-2,3,7-trideoxy-D-lyxo-hept-6-ulosonate + NAD(+) + H2O = 3-dehydroquinate + NH4(+) + NADH + H(+). Functionally, catalyzes the oxidative deamination and cyclization of 2-amino-3,7-dideoxy-D-threo-hept-6-ulosonic acid (ADH) to yield 3-dehydroquinate (DHQ), which is fed into the canonical shikimic pathway of aromatic amino acid biosynthesis. In Methanoculleus marisnigri (strain ATCC 35101 / DSM 1498 / JR1), this protein is 3-dehydroquinate synthase.